The sequence spans 108 residues: Large ribosomal subunit protein uL24 (108 aa).

It belongs to the universal ribosomal protein uL24 family. In terms of assembly, part of the 50S ribosomal subunit.

Functionally, one of two assembly initiator proteins, it binds directly to the 5'-end of the 23S rRNA, where it nucleates assembly of the 50S subunit. One of the proteins that surrounds the polypeptide exit tunnel on the outside of the subunit. The polypeptide is Large ribosomal subunit protein uL24 (Mycoplasmopsis pulmonis (strain UAB CTIP) (Mycoplasma pulmonis)).